A 332-amino-acid polypeptide reads, in one-letter code: Ribosomal RNA small subunit methyltransferase H (332 aa).

S-adenosyl-L-methionine contacts are provided by residues 36-38 (GGY), Asp-54, Phe-81, Asp-102, and Gln-109. The segment at 284–332 (VTAGQEEVSANPRARSAKLRAAERTAAPATADDGESPGWPSLANVMRGG) is disordered.

It belongs to the methyltransferase superfamily. RsmH family.

It localises to the cytoplasm. It catalyses the reaction cytidine(1402) in 16S rRNA + S-adenosyl-L-methionine = N(4)-methylcytidine(1402) in 16S rRNA + S-adenosyl-L-homocysteine + H(+). Specifically methylates the N4 position of cytidine in position 1402 (C1402) of 16S rRNA. The protein is Ribosomal RNA small subunit methyltransferase H of Nitrobacter hamburgensis (strain DSM 10229 / NCIMB 13809 / X14).